The chain runs to 224 residues: MQKLLLIAATSATILSSSLSFAEGMDNEWYLRIDTGAAMFNEEKDKATGVKLKSNTTVPVDLGIGYYISENCRADLTLGTIIGGKLKKSGAATNAPFTGTNVSASHKPTITRLLINGYVDLTNFDMFDVFAGAGVGPALVKEKITYNGITGLSSNTKNRTNISYKLTLGTSAQIADGVKVELAYSWIDDGRTKSKNVIYPGTSVPTGGMRYQSHNLTAGIRFDI.

A signal peptide spans Met-1–Ala-22.

The polypeptide is Putative adhesin RMA_1308 (Rickettsia massiliae (strain Mtu5)).